The sequence spans 252 residues: Imidazole glycerol phosphate synthase subunit HisF (252 aa).

Catalysis depends on residues aspartate 11 and aspartate 130.

This sequence belongs to the HisA/HisF family. As to quaternary structure, heterodimer of HisH and HisF.

It localises to the cytoplasm. It carries out the reaction 5-[(5-phospho-1-deoxy-D-ribulos-1-ylimino)methylamino]-1-(5-phospho-beta-D-ribosyl)imidazole-4-carboxamide + L-glutamine = D-erythro-1-(imidazol-4-yl)glycerol 3-phosphate + 5-amino-1-(5-phospho-beta-D-ribosyl)imidazole-4-carboxamide + L-glutamate + H(+). It functions in the pathway amino-acid biosynthesis; L-histidine biosynthesis; L-histidine from 5-phospho-alpha-D-ribose 1-diphosphate: step 5/9. Functionally, IGPS catalyzes the conversion of PRFAR and glutamine to IGP, AICAR and glutamate. The HisF subunit catalyzes the cyclization activity that produces IGP and AICAR from PRFAR using the ammonia provided by the HisH subunit. This chain is Imidazole glycerol phosphate synthase subunit HisF, found in Bacillus cereus (strain ZK / E33L).